The following is a 135-amino-acid chain: uncharacterized protein (135 aa).

One can recognise a VOC domain in the interval 4 to 129 (SIVHIALVVN…YGNLWDLLQL (126 aa)).

To B.subtilis YwkD.

This is an uncharacterized protein from Shewanella frigidimarina (strain NCIMB 400).